The primary structure comprises 193 residues: Oocyte-secreted protein 3 (193 aa).

The signal sequence occupies residues 1-22; it reads MKDFVRLQSSFLLCTILTLSEQ. N-linked (GlcNAc...) asparagine glycosylation is found at asparagine 64, asparagine 130, asparagine 148, asparagine 151, asparagine 165, and asparagine 178.

It belongs to the PLAC1 family.

Its subcellular location is the secreted. The polypeptide is Oocyte-secreted protein 3 (Homo sapiens (Human)).